The following is a 396-amino-acid chain: FAD-dependent monooxygenase phomE' (396 aa).

E3 lines the FAD pocket. Active-site residues include R158 and Y196. Residues D277 and G290 each coordinate FAD.

The protein belongs to the paxM FAD-dependent monooxygenase family. In terms of assembly, monomer. FAD is required as a cofactor.

In terms of biological role, FAD-dependent monooxygenase; part of the gene cluster that mediates the biosynthesis of the phomopsins, a group of hexapeptide mycotoxins which infects lupins and causes lupinosis disease in livestock. The role of phomE' within the phomopsins biosynthesis pathway has still to be determined. The pathway starts with the processing of the precursor phomA by several endopeptidases including kexin proteases as well as the cluster-specific S41 family peptidase phomP1 and the oligopeptidase phomG to produce 10 identical copies of the hexapeptide Tyr-Val-Ile-Pro-Ile-Asp. After being excised from the precursor peptide, the core peptides are cyclized and modified post-translationally by enzymes encoded within the gene cluster. The timing and order of proteolysis of the phomA precursor and PTMs are still unknown. Two tyrosinase-like enzymes, phomQ1 and phomQ2, catalyze the chlorination and hydroxylation of Tyr, respectively. PhomYb, is proposed to be involved in the construction of the macrocyclic structure. The other 4 ustYa family proteins may be involved in PTMs that generate the unique structure of phomopsin A. PhomYa is required for the hydroxylation of C-beta of Tyr. PhomYc, phomYd, and phomYe are responsible for the biosynthesis of 2,3-dehydroisoleucine (dIle), 2,3-dehydroaspartic acid (dAsp), and 3,4-dehydroproline (dPro), respectively. While dIle formation by phomYc is indispensable for the installation of dAsp by phomYd, the order of the other PTMs have not been elucidated yet. Most of the biosynthetic enzymes likely have broad substrate specificity, and thus, there might be a metabolic grid from a precursor to phomopsin A. The enzyme(s) responsible for the biosynthesis of 3,4-dehydrovaline (dVal) have also not been identified yet. Finally, phomM acts as an S-adenosylmethionine-dependent alpha-N-methyltransferase that catalyzes two successive N-methylation reactions, converting N-desmethyl-phomopsin A to phomopsin A and phomopsin A further to an N,N-dimethylated congener called phomopsin E. This Diaporthe leptostromiformis (Lupinosis disease fungus) protein is FAD-dependent monooxygenase phomE'.